The following is a 410-amino-acid chain: Probable peptidoglycan glycosyltransferase FtsW (410 aa).

The Cytoplasmic segment spans residues 1–37; it reads MRSEERQLNLFGTSVNWSWPNLFKEREAPGMQLYDRA. The chain crosses the membrane as a helical span at residues 38 to 58; the sequence is LLFAVLSLICFGFVMVMSASM. The Periplasmic segment spans residues 59–69; the sequence is PEAQSLTGNPY. A helical transmembrane segment spans residues 70 to 90; sequence HFAIRHFAYLVGCAVIAAVVL. The Cytoplasmic segment spans residues 91 to 99; sequence RIEMSRWQQ. Residues 100 to 120 traverse the membrane as a helical segment; sequence FSPLLLLIVGIMLVAVLLVGT. At 121-131 the chain is on the periplasmic side; the sequence is SVNGATRWLSV. The chain crosses the membrane as a helical span at residues 132–154; it reads GPIRIQVAELAKFAFTIYMAGYL. At 155–163 the chain is on the cytoplasmic side; the sequence is VRRHQEIRE. A helical transmembrane segment spans residues 164–184; the sequence is NAKGFYKPIAVFAVYAFLILM. Over 185 to 186 the chain is Periplasmic; that stretch reads QP. A helical transmembrane segment spans residues 187 to 207; that stretch reads DLGTVVVLFVGTVGLLFLAGA. Arg-208 is a topological domain (cytoplasmic). The helical transmembrane segment at 209-229 threads the bilayer; sequence LLDFFALILTGVMAFVALVLL. Over 230–291 the chain is Periplasmic; it reads EPYRMRRVTS…PEAHTDFIFA (62 aa). Residues 292–312 form a helical membrane-spanning segment; it reads VIGEELGFIGIVVVLSVLLFV. Topologically, residues 313–336 are cytoplasmic; sequence ALRAIKLGNLCIEIDKPFEGYLAY. The chain crosses the membrane as a helical span at residues 337–357; that stretch reads AIGIWFCFQTVVNVGASIGML. The Periplasmic portion of the chain corresponds to 358-364; sequence PTKGLTL. The helical transmembrane segment at 365-385 threads the bilayer; that stretch reads PFISYGGSSLWVMTAAAMILI. The Cytoplasmic portion of the chain corresponds to 386–410; it reads RIDHERRLSSIQAVQGKKVNDNREY.

Belongs to the SEDS family. FtsW subfamily.

The protein resides in the cell inner membrane. It catalyses the reaction [GlcNAc-(1-&gt;4)-Mur2Ac(oyl-L-Ala-gamma-D-Glu-L-Lys-D-Ala-D-Ala)](n)-di-trans,octa-cis-undecaprenyl diphosphate + beta-D-GlcNAc-(1-&gt;4)-Mur2Ac(oyl-L-Ala-gamma-D-Glu-L-Lys-D-Ala-D-Ala)-di-trans,octa-cis-undecaprenyl diphosphate = [GlcNAc-(1-&gt;4)-Mur2Ac(oyl-L-Ala-gamma-D-Glu-L-Lys-D-Ala-D-Ala)](n+1)-di-trans,octa-cis-undecaprenyl diphosphate + di-trans,octa-cis-undecaprenyl diphosphate + H(+). It participates in cell wall biogenesis; peptidoglycan biosynthesis. Its function is as follows. Peptidoglycan polymerase that is essential for cell division. The protein is Probable peptidoglycan glycosyltransferase FtsW of Shewanella sediminis (strain HAW-EB3).